The sequence spans 240 residues: UDP-2,3-diacylglucosamine hydrolase (240 aa).

Mn(2+) contacts are provided by D8, H10, D41, N79, and H114. 79–80 (NR) contributes to the substrate binding site. The substrate site is built by D122, S160, N164, K167, and H195. H195 and H197 together coordinate Mn(2+).

Belongs to the LpxH family. Mn(2+) is required as a cofactor.

The protein resides in the cell inner membrane. The protein localises to the cytoplasm. The enzyme catalyses UDP-2-N,3-O-bis[(3R)-3-hydroxytetradecanoyl]-alpha-D-glucosamine + H2O = 2-N,3-O-bis[(3R)-3-hydroxytetradecanoyl]-alpha-D-glucosaminyl 1-phosphate + UMP + 2 H(+). Its pathway is glycolipid biosynthesis; lipid IV(A) biosynthesis; lipid IV(A) from (3R)-3-hydroxytetradecanoyl-[acyl-carrier-protein] and UDP-N-acetyl-alpha-D-glucosamine: step 4/6. Inhibited by a sulfonyl piperazine compound that shows antibacterial activity against E.coli; LpxH is the cellular target of this compound. Inhibited by 0.01% (or more) Triton X-100 in vitro. Functionally, hydrolyzes the pyrophosphate bond of UDP-2,3-diacylglucosamine to yield 2,3-diacylglucosamine 1-phosphate (lipid X) and UMP by catalyzing the attack of water at the alpha-P atom. Involved in the biosynthesis of lipid A, a phosphorylated glycolipid that anchors the lipopolysaccharide to the outer membrane of the cell. Is essential for E.coli growth. Does not cleave the unacylated UDP-GlcNAc, the mono-acylated UDP-3-O-(R)-3-hydroxymyristoyl-GlcNAc, and CDP-diacylglycerol. This Escherichia coli (strain K12) protein is UDP-2,3-diacylglucosamine hydrolase.